Consider the following 256-residue polypeptide: 5'-nucleotidase SurE (256 aa).

Asp8, Asp9, Ser40, and Asn92 together coordinate a divalent metal cation.

The protein belongs to the SurE nucleotidase family. The cofactor is a divalent metal cation.

It localises to the cytoplasm. It catalyses the reaction a ribonucleoside 5'-phosphate + H2O = a ribonucleoside + phosphate. In terms of biological role, nucleotidase that shows phosphatase activity on nucleoside 5'-monophosphates. The protein is 5'-nucleotidase SurE of Rhizobium meliloti (strain 1021) (Ensifer meliloti).